The following is a 584-amino-acid chain: Sulfite reductase [NADPH] hemoprotein beta-component (584 aa).

Residues C447, C453, C492, and C496 each coordinate [4Fe-4S] cluster. C496 is a siroheme binding site.

It belongs to the nitrite and sulfite reductase 4Fe-4S domain family. As to quaternary structure, alpha(8)-beta(8). The alpha component is a flavoprotein, the beta component is a hemoprotein. Siroheme is required as a cofactor. Requires [4Fe-4S] cluster as cofactor.

The enzyme catalyses hydrogen sulfide + 3 NADP(+) + 3 H2O = sulfite + 3 NADPH + 4 H(+). The protein operates within sulfur metabolism; hydrogen sulfide biosynthesis; hydrogen sulfide from sulfite (NADPH route): step 1/1. Its function is as follows. Component of the sulfite reductase complex that catalyzes the 6-electron reduction of sulfite to sulfide. This is one of several activities required for the biosynthesis of L-cysteine from sulfate. This is Sulfite reductase [NADPH] hemoprotein beta-component from Colwellia psychrerythraea (strain 34H / ATCC BAA-681) (Vibrio psychroerythus).